The following is a 174-amino-acid chain: ATP synthase subunit d, mitochondrial (174 aa).

Serine 2 carries the N-acetylserine modification.

It belongs to the ATPase d subunit family.

Its subcellular location is the mitochondrion inner membrane. Its function is as follows. Mitochondrial membrane ATP synthase (F(1)F(0) ATP synthase or Complex V) produces ATP from ADP in the presence of a proton gradient across the membrane which is generated by electron transport complexes of the respiratory chain. F-type ATPases consist of two structural domains, F(1) - containing the extramembraneous catalytic core, and F(0) - containing the membrane proton channel, linked together by a central stalk and a peripheral stalk. During catalysis, ATP synthesis in the catalytic domain of F(1) is coupled via a rotary mechanism of the central stalk subunits to proton translocation. Part of the complex F(0) domain and the peripheric stalk, which acts as a stator to hold the catalytic alpha(3)beta(3) subcomplex and subunit a/ATP6 static relative to the rotary elements. This Kluyveromyces lactis (strain ATCC 8585 / CBS 2359 / DSM 70799 / NBRC 1267 / NRRL Y-1140 / WM37) (Yeast) protein is ATP synthase subunit d, mitochondrial (ATP7).